The chain runs to 105 residues: Pyrimidine/purine nucleoside phosphorylase (105 aa).

It belongs to the nucleoside phosphorylase PpnP family.

It catalyses the reaction a purine D-ribonucleoside + phosphate = a purine nucleobase + alpha-D-ribose 1-phosphate. The catalysed reaction is adenosine + phosphate = alpha-D-ribose 1-phosphate + adenine. The enzyme catalyses cytidine + phosphate = cytosine + alpha-D-ribose 1-phosphate. It carries out the reaction guanosine + phosphate = alpha-D-ribose 1-phosphate + guanine. It catalyses the reaction inosine + phosphate = alpha-D-ribose 1-phosphate + hypoxanthine. The catalysed reaction is thymidine + phosphate = 2-deoxy-alpha-D-ribose 1-phosphate + thymine. The enzyme catalyses uridine + phosphate = alpha-D-ribose 1-phosphate + uracil. It carries out the reaction xanthosine + phosphate = alpha-D-ribose 1-phosphate + xanthine. Catalyzes the phosphorolysis of diverse nucleosides, yielding D-ribose 1-phosphate and the respective free bases. Can use uridine, adenosine, guanosine, cytidine, thymidine, inosine and xanthosine as substrates. Also catalyzes the reverse reactions. The polypeptide is Pyrimidine/purine nucleoside phosphorylase (Acidovorax ebreus (strain TPSY) (Diaphorobacter sp. (strain TPSY))).